The following is a 593-amino-acid chain: Putative auxin response factor 15 (593 aa).

Residues Phe126–Arg228 constitute a DNA-binding region (TF-B3). Positions Arg511–Arg592 constitute a PB1 domain.

The protein belongs to the ARF family. As to quaternary structure, homodimers and heterodimers.

The protein localises to the nucleus. Auxin response factors (ARFs) are transcriptional factors that bind specifically to the DNA sequence 5'-TGTCTC-3' found in the auxin-responsive promoter elements (AuxREs). Could act as transcriptional activator or repressor. Formation of heterodimers with Aux/IAA proteins may alter their ability to modulate early auxin response genes expression. The polypeptide is Putative auxin response factor 15 (ARF15) (Arabidopsis thaliana (Mouse-ear cress)).